The chain runs to 728 residues: Putative ankyrin repeat protein L271 (728 aa).

ANK repeat units lie at residues 142 to 171 and 173 to 198; these read SDVN…NIKT and IYSA…DIIL. Over residues 244–267 the composition is skewed to low complexity; sequence STKSTKSSGSPKSIKPKKSNQNNN. Positions 244–271 are disordered; the sequence is STKSTKSSGSPKSIKPKKSNQNNNAKIN. Residues 292–338 are a coiled coil; sequence TVDKMSSAKEQALNVYKEIENMENFILNKINITKKKALDKIKEIENI. ANK repeat units lie at residues 358 to 383, 384 to 414, 477 to 510, 514 to 543, 547 to 576, 594 to 626, 630 to 659, and 663 to 696; these read TNTD…RQGY, DINK…NYEQ, DDLS…NINS, IGRS…DYSF, NGDT…DTKT, DIKT…NVSS, TKKT…NINS, and LGKT…KILI.

The chain is Putative ankyrin repeat protein L271 from Acanthamoeba polyphaga (Amoeba).